The following is a 112-amino-acid chain: MYB-like transcription factor ETC2 (112 aa).

The region spanning 41 to 78 (TEQEEDLISRMYRLVGNRWDLIAGRVVGRKANEIERYW) is the Myb-like domain.

As to quaternary structure, interacts with GL3. In terms of tissue distribution, expressed in stomatal guard mother cells, young stomata and trichomes of young leaves, and inflorescences.

The protein resides in the nucleus. In terms of biological role, MYB-type transcription factor involved in epidermal cell fate specification. Acts as a negative regulator of trichome development, by mediating lateral inhibition. Promotes the formation of hair developing cells in H position in root epidermis, probably by inhibiting non-hair cell formation. The polypeptide is MYB-like transcription factor ETC2 (ETC2) (Arabidopsis thaliana (Mouse-ear cress)).